The following is a 454-amino-acid chain: Nuclear envelope integral membrane protein (454 aa).

The signal sequence occupies residues 1–18; that stretch reads MHSAGLLMLTVAGYFTSG. An N-linked (GlcNAc...) asparagine glycan is attached at asparagine 38. A run of 5 helical transmembrane segments spans residues 138 to 158, 166 to 186, 197 to 217, 231 to 251, and 280 to 300; these read IPLDLWRLAQFAVGILILFSA, VFYYLVGIVIGICASLLVVIY, MMYGVLIGGWTIGFYVIKQLA, VLGYLVITGLISFLICYRIGP, and TSAVIFIMVLVFVAHYFPISW. Positions 388 to 405 are enriched in acidic residues; that stretch reads SMDAAPEEESVEEPEEDK. Residues 388 to 454 are disordered; sequence SMDAAPEEES…QEVDLRQVVQ (67 aa). The span at 414 to 424 shows a compositional bias: polar residues; it reads NSQFRYQQAAR. Over residues 428–446 the composition is skewed to acidic residues; the sequence is PEPESESDDSEEEEFFEQE.

Belongs to the NEMP family. As to quaternary structure, interacts with OTE. Expressed in both germline and somatic cells in the larval testis and prepupal ovary (at protein level). Also detected in the larval eye and larval wing disk (at protein level).

The protein resides in the nucleus inner membrane. Contributes to nuclear envelope stiffness in germ cells. Required for male and female fertility. The polypeptide is Nuclear envelope integral membrane protein (Drosophila melanogaster (Fruit fly)).